The chain runs to 55 residues: Accessory gland-specific peptide 70A (55 aa).

Residues 1-19 (MKTLSLFLVLVCLLGLVQS) form the signal peptide. 4 positions are modified to hydroxyproline: proline 28, proline 32, proline 34, and proline 38. Residues cysteine 43 and cysteine 55 are joined by a disulfide bond.

In terms of tissue distribution, main cells of the accessory glands of males (paragonial gland).

The protein resides in the secreted. Functionally, represses female sexual receptivity and stimulates oviposition. The polypeptide is Accessory gland-specific peptide 70A (Acp70A) (Drosophila mauritiana (Fruit fly)).